The primary structure comprises 159 residues: Endoribonuclease YbeY (159 aa).

Zn(2+) is bound by residues histidine 123, histidine 127, and histidine 133.

It belongs to the endoribonuclease YbeY family. It depends on Zn(2+) as a cofactor.

The protein localises to the cytoplasm. Single strand-specific metallo-endoribonuclease involved in late-stage 70S ribosome quality control and in maturation of the 3' terminus of the 16S rRNA. The sequence is that of Endoribonuclease YbeY from Bacillus pumilus (strain SAFR-032).